The chain runs to 234 residues: Segregation and condensation protein A (234 aa).

Belongs to the ScpA family. As to quaternary structure, component of a cohesin-like complex composed of ScpA, ScpB and the Smc homodimer, in which ScpA and ScpB bind to the head domain of Smc. The presence of the three proteins is required for the association of the complex with DNA.

It is found in the cytoplasm. Participates in chromosomal partition during cell division. May act via the formation of a condensin-like complex containing Smc and ScpB that pull DNA away from mid-cell into both cell halves. The chain is Segregation and condensation protein A from Streptococcus pyogenes serotype M3 (strain ATCC BAA-595 / MGAS315).